A 131-amino-acid chain; its full sequence is EG45-like domain containing protein (131 aa).

The signal sequence occupies residues 1 to 24 (MGVGTKVLVITTMAICLISSAAYA). One can recognise an Expansin-like EG45; incomplete domain in the interval 27–131 (GTATFYTPPY…GKIKIEFNQA (105 aa)). A disulfide bridge links Cys73 with Cys85.

In terms of tissue distribution, expressed in the outer layer of xylem and the vascular cambial zone of roots, in shoot cambium, but not in leaves.

The protein localises to the secreted. Functionally, might have a systemic role in water and solute homeostasis. Has no expansin-like activity. In Citrus jambhiri (Rough lemon), this protein is EG45-like domain containing protein (CjBAp12).